Reading from the N-terminus, the 339-residue chain is D-erythrose-4-phosphate dehydrogenase (339 aa).

12–13 (RI) serves as a coordination point for NAD(+). Residues 154–156 (SCT), arginine 200, 213–214 (TK), and arginine 236 contribute to the substrate site. The active-site Nucleophile is cysteine 155. Residue asparagine 318 coordinates NAD(+).

It belongs to the glyceraldehyde-3-phosphate dehydrogenase family. Epd subfamily. Homotetramer.

The protein localises to the cytoplasm. The enzyme catalyses D-erythrose 4-phosphate + NAD(+) + H2O = 4-phospho-D-erythronate + NADH + 2 H(+). Its pathway is cofactor biosynthesis; pyridoxine 5'-phosphate biosynthesis; pyridoxine 5'-phosphate from D-erythrose 4-phosphate: step 1/5. Functionally, catalyzes the NAD-dependent conversion of D-erythrose 4-phosphate to 4-phosphoerythronate. The protein is D-erythrose-4-phosphate dehydrogenase of Photorhabdus laumondii subsp. laumondii (strain DSM 15139 / CIP 105565 / TT01) (Photorhabdus luminescens subsp. laumondii).